Here is a 255-residue protein sequence, read N- to C-terminus: Pyridoxine 5'-phosphate synthase (255 aa).

N12 contributes to the 3-amino-2-oxopropyl phosphate binding site. Residue D14–H15 participates in 1-deoxy-D-xylulose 5-phosphate binding. Position 23 (R23) interacts with 3-amino-2-oxopropyl phosphate. H48 functions as the Proton acceptor in the catalytic mechanism. R50 and H55 together coordinate 1-deoxy-D-xylulose 5-phosphate. Catalysis depends on E75, which acts as the Proton acceptor. T105 contacts 1-deoxy-D-xylulose 5-phosphate. H199 functions as the Proton donor in the catalytic mechanism. Residues G200 and G221–F222 each bind 3-amino-2-oxopropyl phosphate.

Belongs to the PNP synthase family. In terms of assembly, homooctamer; tetramer of dimers.

The protein localises to the cytoplasm. The enzyme catalyses 3-amino-2-oxopropyl phosphate + 1-deoxy-D-xylulose 5-phosphate = pyridoxine 5'-phosphate + phosphate + 2 H2O + H(+). It participates in cofactor biosynthesis; pyridoxine 5'-phosphate biosynthesis; pyridoxine 5'-phosphate from D-erythrose 4-phosphate: step 5/5. Its function is as follows. Catalyzes the complicated ring closure reaction between the two acyclic compounds 1-deoxy-D-xylulose-5-phosphate (DXP) and 3-amino-2-oxopropyl phosphate (1-amino-acetone-3-phosphate or AAP) to form pyridoxine 5'-phosphate (PNP) and inorganic phosphate. This is Pyridoxine 5'-phosphate synthase from Rhodopseudomonas palustris (strain BisB18).